We begin with the raw amino-acid sequence, 433 residues long: Inositol hexakisphosphate kinase 1 (433 aa).

Residues Glu-100 to Ser-160 form a disordered region. Over residues Pro-113–His-123 the composition is skewed to basic residues. Polar residues predominate over residues Ser-139–Thr-149. Residues Lys-150–Ser-160 are compositionally biased toward basic and acidic residues. A Phosphoserine modification is found at Ser-151. Pro-220 to Gly-228 is a substrate binding site. The tract at residues Pro-362 to Pro-383 is disordered. The span at Pro-366–Leu-375 shows a compositional bias: polar residues.

The protein belongs to the inositol phosphokinase (IPK) family.

The protein localises to the cytoplasm. The protein resides in the nucleus. It catalyses the reaction 1D-myo-inositol hexakisphosphate + ATP = 5-diphospho-1D-myo-inositol 1,2,3,4,6-pentakisphosphate + ADP. It carries out the reaction 1-diphospho-1D-myo-inositol 2,3,4,5,6-pentakisphosphate + ATP + H(+) = 1,5-bis(diphospho)-1D-myo-inositol 2,3,4,6-tetrakisphosphate + ADP. Functionally, converts inositol hexakisphosphate (InsP6) to diphosphoinositol pentakisphosphate (InsP7/PP-InsP5). Converts 1,3,4,5,6-pentakisphosphate (InsP5) to PP-InsP4. The protein is Inositol hexakisphosphate kinase 1 (Ip6k1) of Rattus norvegicus (Rat).